The sequence spans 144 residues: Putative RNase YutE (144 aa).

R96 is an active-site residue. The short motif at 96-103 (RKTLVQQY) is the RX(4)HXY motif element.

This sequence belongs to the HepT RNase toxin family. As to quaternary structure, homodimer, probably forms a complex with cognate antitoxin YutD.

Functionally, probable toxic component of a putative type VII toxin-antitoxin (TA) system, probably an RNase. Probably neutralized by cognate antitoxin YutD. This chain is Putative RNase YutE (yutE), found in Bacillus subtilis (strain 168).